Here is a 134-residue protein sequence, read N- to C-terminus: Replication enhancer protein (134 aa).

This sequence belongs to the geminiviridae replication enhancer protein family. Homooligomer. Interacts with the replication-associated protein (REP). Interacts with host proliferating cell nuclear antigen (PCNA). Interacts with host retinoblastoma-related protein 1 (RBR1), and may thereby deregulate the host cell cycle. Oligomerization and interaction with PCNA are necessary for optimal replication enhancement.

Its function is as follows. Increases viral DNA accumulation. Enhances infectivity and symptom expression. The polypeptide is Replication enhancer protein (Manihot esculenta (Cassava)).